The following is a 44-amino-acid chain: Pandinin-1 (44 aa).

Expressed by the venom gland.

It localises to the secreted. The protein resides in the target cell membrane. Functionally, disrupts cell membranes through formation of pores. Strong antimicrobial activity against Gram-positive bacteria B.subtilis, S.epidermidis, E.faecalis and S.aureus. Less active against Gram-negative bacteria P.aeruginosa and E.coli. Has no antifungal or hemolytic activity. The chain is Pandinin-1 from Pandinus imperator (Emperor scorpion).